The chain runs to 143 residues: Large ribosomal subunit protein uL11 (143 aa).

This sequence belongs to the universal ribosomal protein uL11 family. As to quaternary structure, part of the ribosomal stalk of the 50S ribosomal subunit. Interacts with L10 and the large rRNA to form the base of the stalk. L10 forms an elongated spine to which L12 dimers bind in a sequential fashion forming a multimeric L10(L12)X complex. One or more lysine residues are methylated.

In terms of biological role, forms part of the ribosomal stalk which helps the ribosome interact with GTP-bound translation factors. In Variovorax paradoxus (strain S110), this protein is Large ribosomal subunit protein uL11.